The primary structure comprises 228 residues: 2-C-methyl-D-erythritol 4-phosphate cytidylyltransferase (228 aa).

It belongs to the IspD/TarI cytidylyltransferase family. IspD subfamily.

It carries out the reaction 2-C-methyl-D-erythritol 4-phosphate + CTP + H(+) = 4-CDP-2-C-methyl-D-erythritol + diphosphate. The protein operates within isoprenoid biosynthesis; isopentenyl diphosphate biosynthesis via DXP pathway; isopentenyl diphosphate from 1-deoxy-D-xylulose 5-phosphate: step 2/6. Functionally, catalyzes the formation of 4-diphosphocytidyl-2-C-methyl-D-erythritol from CTP and 2-C-methyl-D-erythritol 4-phosphate (MEP). This Crocosphaera subtropica (strain ATCC 51142 / BH68) (Cyanothece sp. (strain ATCC 51142)) protein is 2-C-methyl-D-erythritol 4-phosphate cytidylyltransferase.